Reading from the N-terminus, the 453-residue chain is Ribosome biogenesis protein SSF1 (453 aa).

Positions 1–11 (MAKRRQKKRTH) are enriched in basic residues. Disordered regions lie at residues 1–22 (MAKR…EQGI), 275–324 (KAKH…PRKK), and 374–453 (KMRL…SEVE). In terms of domain architecture, Brix spans 26 to 348 (MVIRVGQTSL…LVKIEEGICS (323 aa)). The segment covering 288-300 (PVEKKDNKEREKE) has biased composition (basic and acidic residues). Threonine 301 is subject to Phosphothreonine. Over residues 374-398 (KMRLKEQRKKEQEENIAKKKAVKDA) the composition is skewed to basic and acidic residues. Over residues 399 to 409 (KKQRKLERRKA) the composition is skewed to basic residues. Basic and acidic residues predominate over residues 410–423 (RAAEGGEGQGKDDA). Residues 442–453 (EDLDSDLFSEVE) are compositionally biased toward acidic residues.

Part of a complex that includes BRX1, RPF1, RPF2 and SSF1 or SSF2.

The protein localises to the nucleus. It is found in the nucleolus. Its function is as follows. Required for biogenesis of the 60S ribosomal subunit. The chain is Ribosome biogenesis protein SSF1 (SSF1) from Saccharomyces cerevisiae (strain ATCC 204508 / S288c) (Baker's yeast).